Here is a 315-residue protein sequence, read N- to C-terminus: MHSLRLILMSIQLLCYLLLCPVDATSHGEATSVSTVLPPSKLGYQMQTSDKPLSCQMLLPKSLPGFTYMPPVSKFLVGLALRNALEAAGCQAEVWALQLQLYRLGGVEATQALIHHLQELQKSGHTDREVSVDALSSALQLLAWEQPGPKRAKRSISNTDCDNDQEQSVHNVVDLLPAVGTYYNLGTALYYAIKNCSDKAKERGRDGAIDLGYDLLMAMVGASGGPAGAVITAALKPAMKAGVQRLIQYYYDEKEVTTPQPEVTTHQPETGKDATTDIGVVEEIAMSNFVSEVESTTSNWEWPLLKNYGVLAYKR.

The first 24 residues, Met1–Ala24, serve as a signal peptide directing secretion. A propeptide spanning residues Thr25–Arg154 is cleaved from the precursor.

It belongs to the apolipoprotein F family. As to expression, liver.

The protein resides in the secreted. Minor apolipoprotein that associates with LDL. Inhibits cholesteryl ester transfer protein (CETP) activity and appears to be an important regulator of cholesterol transport. Also associates to a lesser degree with VLDL, Apo-AI and Apo-AII. This is Apolipoprotein F (Apof) from Mus musculus (Mouse).